The primary structure comprises 247 residues: Ubiquinone biosynthesis O-methyltransferase (247 aa).

4 residues coordinate S-adenosyl-L-methionine: arginine 45, glycine 65, aspartate 86, and leucine 130.

It belongs to the methyltransferase superfamily. UbiG/COQ3 family.

The catalysed reaction is a 3-demethylubiquinol + S-adenosyl-L-methionine = a ubiquinol + S-adenosyl-L-homocysteine + H(+). The enzyme catalyses a 3-(all-trans-polyprenyl)benzene-1,2-diol + S-adenosyl-L-methionine = a 2-methoxy-6-(all-trans-polyprenyl)phenol + S-adenosyl-L-homocysteine + H(+). Its pathway is cofactor biosynthesis; ubiquinone biosynthesis. Its function is as follows. O-methyltransferase that catalyzes the 2 O-methylation steps in the ubiquinone biosynthetic pathway. The sequence is that of Ubiquinone biosynthesis O-methyltransferase from Alkalilimnicola ehrlichii (strain ATCC BAA-1101 / DSM 17681 / MLHE-1).